The following is a 156-amino-acid chain: MPRKGPAPKRPLVNDPVYGSQLVTQLVNKVLLKGKKSLAERIVYGALENAREKTGTDPVITLKRALDNVKPALEVRSRRVGGATYQVPVEVRPDRSTTLALRWLVSFSRQRREKTMVERLANEILDASNGLGASVKRREDTHKMAEANRAFAHYRW.

It belongs to the universal ribosomal protein uS7 family. In terms of assembly, part of the 30S ribosomal subunit. Contacts proteins S9 and S11.

In terms of biological role, one of the primary rRNA binding proteins, it binds directly to 16S rRNA where it nucleates assembly of the head domain of the 30S subunit. Is located at the subunit interface close to the decoding center, probably blocks exit of the E-site tRNA. The chain is Small ribosomal subunit protein uS7 from Mycobacterium avium (strain 104).